Consider the following 241-residue polypeptide: Thyroid transcription factor 1-associated protein 26 (241 aa).

Disordered regions lie at residues 1–22 (MAPV…GEGV) and 182–205 (KRAA…RQYK). Residues 186 to 202 (KKQEFERRKQEREEAQR) show a composition bias toward basic and acidic residues.

It belongs to the TAP26 family. As to quaternary structure, interacts with NKX2-1. Ubiquitously expressed. In lung, expression is restricted to the alveolar epithelial cells.

It is found in the nucleus. In terms of biological role, component of the transcription complexes of the pulmonary surfactant-associated protein-B (SFTPB) and -C (SFTPC). Enhances homeobox protein Nkx-2.1-activated SFTPB and SFTPC promoter activities. This chain is Thyroid transcription factor 1-associated protein 26 (CCDC59), found in Homo sapiens (Human).